The primary structure comprises 122 residues: Protein FAM223A (122 aa).

It belongs to the FAM223 family.

In Homo sapiens (Human), this protein is Protein FAM223A (FAM223A).